The following is a 361-amino-acid chain: Phosphoserine aminotransferase (361 aa).

R43 is an L-glutamate binding site. Pyridoxal 5'-phosphate is bound by residues 77–78, W103, T153, D173, and Q196; that span reads AS. K197 is subject to N6-(pyridoxal phosphate)lysine. 238–239 contacts pyridoxal 5'-phosphate; sequence NT.

This sequence belongs to the class-V pyridoxal-phosphate-dependent aminotransferase family. SerC subfamily. In terms of assembly, homodimer. Requires pyridoxal 5'-phosphate as cofactor.

Its subcellular location is the cytoplasm. The enzyme catalyses O-phospho-L-serine + 2-oxoglutarate = 3-phosphooxypyruvate + L-glutamate. It carries out the reaction 4-(phosphooxy)-L-threonine + 2-oxoglutarate = (R)-3-hydroxy-2-oxo-4-phosphooxybutanoate + L-glutamate. Its pathway is amino-acid biosynthesis; L-serine biosynthesis; L-serine from 3-phospho-D-glycerate: step 2/3. It functions in the pathway cofactor biosynthesis; pyridoxine 5'-phosphate biosynthesis; pyridoxine 5'-phosphate from D-erythrose 4-phosphate: step 3/5. In terms of biological role, catalyzes the reversible conversion of 3-phosphohydroxypyruvate to phosphoserine and of 3-hydroxy-2-oxo-4-phosphonooxybutanoate to phosphohydroxythreonine. This Pseudomonas paraeruginosa (strain DSM 24068 / PA7) (Pseudomonas aeruginosa (strain PA7)) protein is Phosphoserine aminotransferase.